We begin with the raw amino-acid sequence, 61 residues long: Small ribosomal subunit protein uS14 (61 aa).

4 residues coordinate Zn(2+): C24, C27, C40, and C43.

This sequence belongs to the universal ribosomal protein uS14 family. Zinc-binding uS14 subfamily. As to quaternary structure, part of the 30S ribosomal subunit. Contacts proteins S3 and S10. It depends on Zn(2+) as a cofactor.

Functionally, binds 16S rRNA, required for the assembly of 30S particles and may also be responsible for determining the conformation of the 16S rRNA at the A site. This chain is Small ribosomal subunit protein uS14, found in Staphylococcus carnosus (strain TM300).